A 335-amino-acid chain; its full sequence is Transmembrane protein 120B (335 aa).

Residues 1–39 (MSLQKCQEEWGELEKEFQQLQETHKVYKQKLEELNGLQN) adopt a coiled-coil conformation. The next 6 helical transmembrane spans lie at 100–122 (GLYL…AKFA), 130–150 (FKLY…FVLH), 157–177 (VFNF…SILI), 193–213 (VSTF…YQIF), 268–288 (FLLP…ITLF), and 300–320 (QVFV…LTTL).

This sequence belongs to the TMEM120 family.

It localises to the nucleus inner membrane. In terms of biological role, necessary for efficient adipogenesis. Does not show ion channel activity. This Xenopus tropicalis (Western clawed frog) protein is Transmembrane protein 120B (tmem120b).